Here is a 313-residue protein sequence, read N- to C-terminus: Sororin-like protein 1 (313 aa).

Residues 44–46 (FGF) carry the FGF motif motif. The tract at residues 105 to 287 (ADENQQSVPT…NDNLKELTPG (183 aa)) is disordered. Residues 107–118 (ENQQSVPTVSIA) are compositionally biased toward polar residues. The segment covering 123 to 134 (PELPPSSSPLLP) has biased composition (pro residues). Residues 135–154 (PNGSESSSPIPLSLLSTSSL) are compositionally biased toward low complexity. Polar residues predominate over residues 155 to 170 (QQRKITPSNLSNTSKP). Residues 184 to 196 (HGHHLTRLRKKRR) are compositionally biased toward basic residues. Over residues 249–264 (EKKILKTYHSQDKDTA) the composition is skewed to basic and acidic residues. Residues 288–310 (KKEYLKSIKKYFQDVDDYQLHVV) are C-terminal Sororin domain.

This sequence belongs to the sororin family. Interacts with Pds5 and Psm3.

The protein resides in the nucleus. Regulator of sister chromatid cohesion in mitosis stabilizing cohesin complex association with chromatin. Antagonizes the action of wpl1 which stimulates cohesin dissociation from chromatin. Cohesion ensures that chromosome partitioning is accurate in dividing cells and may play an important role in DNA repair. This chain is Sororin-like protein 1, found in Schizosaccharomyces pombe (strain 972 / ATCC 24843) (Fission yeast).